A 389-amino-acid polypeptide reads, in one-letter code: Succinate--CoA ligase [ADP-forming] subunit beta (389 aa).

The ATP-grasp domain maps to 9-244 (KQLFADYGLP…PSQEDERERR (236 aa)). Residues Lys-46, 53–55 (GRG), Glu-99, Thr-102, and Glu-107 each bind ATP. Positions 199 and 213 each coordinate Mg(2+). Substrate is bound by residues Asn-264 and 321–323 (GIV).

It belongs to the succinate/malate CoA ligase beta subunit family. As to quaternary structure, heterotetramer of two alpha and two beta subunits. Mg(2+) serves as cofactor.

It carries out the reaction succinate + ATP + CoA = succinyl-CoA + ADP + phosphate. The enzyme catalyses GTP + succinate + CoA = succinyl-CoA + GDP + phosphate. It functions in the pathway carbohydrate metabolism; tricarboxylic acid cycle; succinate from succinyl-CoA (ligase route): step 1/1. Its function is as follows. Succinyl-CoA synthetase functions in the citric acid cycle (TCA), coupling the hydrolysis of succinyl-CoA to the synthesis of either ATP or GTP and thus represents the only step of substrate-level phosphorylation in the TCA. The beta subunit provides nucleotide specificity of the enzyme and binds the substrate succinate, while the binding sites for coenzyme A and phosphate are found in the alpha subunit. This chain is Succinate--CoA ligase [ADP-forming] subunit beta, found in Alcanivorax borkumensis (strain ATCC 700651 / DSM 11573 / NCIMB 13689 / SK2).